The primary structure comprises 443 residues: Chromosomal replication initiator protein DnaA (443 aa).

Positions 1–80 (MFLEEKLNLV…ETCGDKIPVE (80 aa)) are domain I, interacts with DnaA modulators. The interval 80–104 (EILIETKAASPLQSILEKSFDQKDF) is domain II. Residues 105-321 (QFNPDYTFET…GALNDIYLYK (217 aa)) form a domain III, AAA+ region region. Residues G148, G150, K151, and T152 each coordinate ATP. Residues 322–443 (KSYSLLFLNL…ERISSKYKLQ (122 aa)) are domain IV, binds dsDNA.

This sequence belongs to the DnaA family. In terms of assembly, oligomerizes as a right-handed, spiral filament on DNA at oriC.

Its subcellular location is the cytoplasm. In terms of biological role, plays an essential role in the initiation and regulation of chromosomal replication. ATP-DnaA binds to the origin of replication (oriC) to initiate formation of the DNA replication initiation complex once per cell cycle. Binds the DnaA box (a 9 base pair repeat at the origin) and separates the double-stranded (ds)DNA. Forms a right-handed helical filament on oriC DNA; dsDNA binds to the exterior of the filament while single-stranded (ss)DNA is stabiized in the filament's interior. The ATP-DnaA-oriC complex binds and stabilizes one strand of the AT-rich DNA unwinding element (DUE), permitting loading of DNA polymerase. After initiation quickly degrades to an ADP-DnaA complex that is not apt for DNA replication. Binds acidic phospholipids. The polypeptide is Chromosomal replication initiator protein DnaA (Leptospira interrogans serogroup Icterohaemorrhagiae serovar copenhageni (strain Fiocruz L1-130)).